The chain runs to 295 residues: Protease HtpX (295 aa).

The next 2 helical transmembrane spans lie at 4 to 24 (ILLF…TLSL) and 41 to 61 (SSLL…SLFI). Residue H147 participates in Zn(2+) binding. Residue E148 is part of the active site. A Zn(2+)-binding site is contributed by H151. Transmembrane regions (helical) follow at residues 158–178 (VTLA…ARII) and 199–219 (VATI…VMWF). Position 224 (E224) interacts with Zn(2+).

The protein belongs to the peptidase M48B family. Zn(2+) is required as a cofactor.

It is found in the cell inner membrane. The protein is Protease HtpX of Pseudomonas putida (strain W619).